A 484-amino-acid polypeptide reads, in one-letter code: tRNA-2-methylthio-N(6)-dimethylallyladenosine synthase (484 aa).

The region spanning 36 to 153 (GKLYIKTHGC…LPELIRARRE (118 aa)) is the MTTase N-terminal domain. 6 residues coordinate [4Fe-4S] cluster: C45, C82, C116, C190, C194, and C197. A Radical SAM core domain is found at 176–415 (RAEGPSAFVS…HISAHAASIS (240 aa)). Positions 416–479 (QSMVGSVQRV…SNSLRGRIQL (64 aa)) constitute a TRAM domain. The tract at residues 428–450 (EGPSRRDPNELTGKSENMRPVNF) is disordered.

It belongs to the methylthiotransferase family. MiaB subfamily. Monomer. The cofactor is [4Fe-4S] cluster.

It is found in the cytoplasm. It catalyses the reaction N(6)-dimethylallyladenosine(37) in tRNA + (sulfur carrier)-SH + AH2 + 2 S-adenosyl-L-methionine = 2-methylsulfanyl-N(6)-dimethylallyladenosine(37) in tRNA + (sulfur carrier)-H + 5'-deoxyadenosine + L-methionine + A + S-adenosyl-L-homocysteine + 2 H(+). Functionally, catalyzes the methylthiolation of N6-(dimethylallyl)adenosine (i(6)A), leading to the formation of 2-methylthio-N6-(dimethylallyl)adenosine (ms(2)i(6)A) at position 37 in tRNAs that read codons beginning with uridine. The chain is tRNA-2-methylthio-N(6)-dimethylallyladenosine synthase from Xanthomonas oryzae pv. oryzae (strain MAFF 311018).